A 353-amino-acid chain; its full sequence is Galectin-9 (353 aa).

Residues 17–147 (FTGPIQGGLQ…CLKLSFITFQ (131 aa)) enclose the Galectin 1 domain. Residues N47, H60, R64, N74, and 81–87 (WGPEERK) contribute to the a beta-D-galactoside site. The interval 167–186 (QFPRTPKGRKQKTQNFRPAH) is disordered. One can recognise a Galectin 2 domain in the interval 225-353 (FYTPIPNGLY…GDIQLTHVQT (129 aa)). A beta-D-galactoside-binding positions include H265, R269, T279, and 285-291 (WGQEERS).

Homodimer. Accentuated expression in liver and thymus of embryo, detected in embryonic heart, brain, lung, liver, and kidney. Highly expressed in adult thymus, small intestine, and liver, and to a lesser extent in lung, kidney, spleen, cardiac, and skeletal muscle. Barely detectable in brain and reticulocyte. Expressed in placenta, uterus and decidua during pregnancy. Expressed in CD4+ T-cells with higher levels in iTreg cells than other T-cell types and sustained high levels throughout iTreg cell differentiation (at protein level). Expressed in myeloid cells in lung. Constitutively expressed in microglia. Isoform 1 is expressed exclusively in the small intestine. Isoform 2 expression in decidua increases in pathological pregnancy from gestation day 7.5 to 13.5 and it is higher than in normal pregnancy. Isoform 3 expression in decidua is higher in normal pregnancy than in pathological pregnancy.

The protein localises to the cytoplasm. Its subcellular location is the nucleus. The protein resides in the secreted. Binds galactosides. Has high affinity for the Forssman pentasaccharide. Ligand for HAVCR2/TIM3. Binding to HAVCR2 induces T-helper type 1 lymphocyte (Th1) death. Also stimulates bactericidal activity in infected macrophages by causing macrophage activation and IL1B secretion which restricts intracellular bacterial growth. Ligand for P4HB; the interaction retains P4HB at the cell surface of Th2 T-helper cells, increasing disulfide reductase activity at the plasma membrane, altering the plasma membrane redox state and enhancing cell migration. Ligand for CD44; the interaction enhances binding of SMAD3 to the FOXP3 promoter, leading to up-regulation of FOXP3 expression and increased induced regulatory T (iTreg) cell stability and suppressive function. Promotes ability of mesenchymal stromal cells to suppress T-cell proliferation. Expands regulatory T-cells and induces cytotoxic T-cell apoptosis following virus infection. Activates ERK1/2 phosphorylation inducing cytokine (IL-6, IL-8, IL-12) and chemokine (CCL2) production in mast and dendritic cells. Inhibits degranulation and induces apoptosis of mast cells. Induces maturation and migration of dendritic cells. Inhibits natural killer (NK) cell function. Can transform NK cell phenotype from peripheral to decidual during pregnancy. Astrocyte derived galectin-9 enhances microglial TNF production. May play a role in thymocyte-epithelial interactions relevant to the biology of the thymus. May provide the molecular basis for urate flux across cell membranes, allowing urate that is formed during purine metabolism to efflux from cells and serving as an electrogenic transporter that plays an important role in renal and gastrointestinal urate excretion. Highly selective to the anion urate. In terms of biological role, acts as an eosinophil chemoattractant. It also inhibits angiogenesis. Suppresses IFNG production by natural killer cells. This is Galectin-9 (Lgals9) from Mus musculus (Mouse).